Consider the following 175-residue polypeptide: Shikimate kinase (175 aa).

16–21 (GAGKST) is an ATP binding site. Ser20 serves as a coordination point for Mg(2+). Substrate contacts are provided by Asp38, Arg62, and Gly84. An ATP-binding site is contributed by Arg122. Substrate is bound at residue Arg141.

Belongs to the shikimate kinase family. Monomer. Requires Mg(2+) as cofactor.

The protein localises to the cytoplasm. It carries out the reaction shikimate + ATP = 3-phosphoshikimate + ADP + H(+). It functions in the pathway metabolic intermediate biosynthesis; chorismate biosynthesis; chorismate from D-erythrose 4-phosphate and phosphoenolpyruvate: step 5/7. In terms of biological role, catalyzes the specific phosphorylation of the 3-hydroxyl group of shikimic acid using ATP as a cosubstrate. The polypeptide is Shikimate kinase (Legionella pneumophila (strain Paris)).